We begin with the raw amino-acid sequence, 142 residues long: Cell division protein SepF (142 aa).

The protein belongs to the SepF family. In terms of assembly, homodimer. Interacts with FtsZ.

The protein resides in the cytoplasm. In terms of biological role, cell division protein that is part of the divisome complex and is recruited early to the Z-ring. Probably stimulates Z-ring formation, perhaps through the cross-linking of FtsZ protofilaments. Its function overlaps with FtsA. This Syntrophomonas wolfei subsp. wolfei (strain DSM 2245B / Goettingen) protein is Cell division protein SepF.